The chain runs to 295 residues: MSNISSVNIKELLDAGVHFGHKTSRWNPKMASYIYGERDDVHIIDLRQSAALMSVALNAIYETVKKDGKVLFVSTKIQASDIIAEYAEKCGQYYVNHRWLGGMLTNWKTIAGSIEKLNKLEKTLENAEALIGYTKKEILDMSRKKEKLLLSLAGIRNLNSKPDLLVVIDTNKEHIAINEAVKLNVPIVAVVDTNSNPDNVDYPIPGNDDSIRSIRLYCRLFADAALQGLEESMKASGVDMGAMHEHTDNALISKNVSKLKQAKKFSKTKNIDEETNTEFEQALNDTDENKNADNA.

A disordered region spans residues 264-295; it reads KFSKTKNIDEETNTEFEQALNDTDENKNADNA.

It belongs to the universal ribosomal protein uS2 family.

The sequence is that of Small ribosomal subunit protein uS2 from Rickettsia akari (strain Hartford).